Here is a 1485-residue protein sequence, read N- to C-terminus: Chromosome partition protein MukB (1485 aa).

ATP is bound at residue Gly34–Ser41. 6 coiled-coil regions span residues Leu337–Gln480, Gln509–Leu605, Arg780–Ser805, Glu835–His915, Gly977–Gly1116, and Glu1210–Ile1235. Residues Pro666 to Arg783 form a flexible hinge region.

It belongs to the SMC family. MukB subfamily. Homodimerization via its hinge domain. Binds to DNA via its C-terminal region. Interacts, and probably forms a ternary complex, with MukE and MukF via its C-terminal region. The complex formation is stimulated by calcium or magnesium. Interacts with tubulin-related protein FtsZ.

Its subcellular location is the cytoplasm. The protein localises to the nucleoid. Plays a central role in chromosome condensation, segregation and cell cycle progression. Functions as a homodimer, which is essential for chromosome partition. Involved in negative DNA supercoiling in vivo, and by this means organize and compact chromosomes. May achieve or facilitate chromosome segregation by condensation DNA from both sides of a centrally located replisome during cell division. The protein is Chromosome partition protein MukB of Yersinia pseudotuberculosis serotype O:1b (strain IP 31758).